Reading from the N-terminus, the 160-residue chain is 6-hydroxypseudooxynicotine dehydrogenase complex subunit beta (160 aa).

Residues 4–80 form the 2Fe-2S ferredoxin-type domain; the sequence is FRLTVEVNGV…NSRIETVESL (77 aa). Cysteine 42, cysteine 47, cysteine 50, cysteine 62, cysteine 101, cysteine 104, cysteine 137, and cysteine 139 together coordinate [2Fe-2S] cluster.

Heterohexamer of 2 alpha (kdhA), 2 beta (kdhB) and 2 gamma (kdhC) subunit. Dimer of heterotrimers. Requires [2Fe-2S] cluster as cofactor.

It catalyses the reaction 6-hydroxypseudooxynicotine + A + H2O = 2,6-dihydroxypseudooxynicotine + AH2. It functions in the pathway alkaloid degradation; nicotine degradation. Molybdo-flavoprotein enzyme complex involved in nicotine degradation. The subunit gamma (large subunit) contains the substrate-binding sites, the subunit alpha (medium subunit) binds FAD and the subunit beta (small subunit) has a 2Fe-2S ferredoxin-type domain which binds 2 2Fe-2S clusters. The chain is 6-hydroxypseudooxynicotine dehydrogenase complex subunit beta (kdhB) from Paenarthrobacter nicotinovorans (Arthrobacter nicotinovorans).